The primary structure comprises 426 residues: MSMVHGSSFQIAQDGENENQGVQRVKKAGLTARGNVAVAKRSALGTITNQNIRVQPSRAAKSGNADCQDENVFAKQKSFGSSNNENKGFKIHVDEPTVQVLTTATLKTTRQSEDEDIKLNDQVTSLPSLQALEDIQVDNENGSPMVLDVTIEDAEKKPIDREAIILSVPEYAEDIYKHLREAESRHRSKPGYMKKQPDITNSMRSILVDWMVEVSEEYKLHRETLFLAINYIDRFLSQMSVLRGKLQLVGAASMFIASKYEEIYPPEVSEFVYITDDTYEQKQVLRMEHLILKVLSFDVAQPTINWFTDTYAKMADTDETTKSLSMYLSELTLVDADPYLKYLPSTIAAASLCLANITLGSEPWPSSLAKESKYEISEFSECLQEMYQTYLNAPNHPQQAIREKYKSSKYQQVSSISPPSSLSFTM.

A compositionally biased stretch (polar residues) spans 1–11; that stretch reads MSMVHGSSFQI. A disordered region spans residues 1–22; the sequence is MSMVHGSSFQIAQDGENENQGV.

Belongs to the cyclin family. Cyclin AB subfamily.

Its function is as follows. Essential for the control of the cell cycle at the G2/M (mitosis) transition. Interacts with the CDC2 and CDK2 protein kinases to form MPF. G2/M cyclins accumulate steadily during G2 and are abruptly destroyed at mitosis. The protein is G2/mitotic-specific cyclin-A of Patella vulgata (Common limpet).